We begin with the raw amino-acid sequence, 674 residues long: ATP-dependent DNA helicase Hel308 (674 aa).

ATP is bound by residues Gln27 and 44 to 51 (VPTAAGKT). The 167-residue stretch at 31–197 (IEQIRKGRNV…WLDASLIKSD (167 aa)) folds into the Helicase ATP-binding domain. The DEAH box signature appears at 142–145 (DEIH). One can recognise a Helicase C-terminal domain in the interval 224-411 (SINQIIRETV…EAKVRFNTLA (188 aa)).

It belongs to the helicase family. Hel308 subfamily. Monomer.

The enzyme catalyses Couples ATP hydrolysis with the unwinding of duplex DNA by translocating in the 3'-5' direction.. It catalyses the reaction ATP + H2O = ADP + phosphate + H(+). Functionally, DNA-dependent ATPase and 3'-5' DNA helicase that may be involved in repair of stalled replication forks. The sequence is that of ATP-dependent DNA helicase Hel308 from Thermoplasma acidophilum (strain ATCC 25905 / DSM 1728 / JCM 9062 / NBRC 15155 / AMRC-C165).